We begin with the raw amino-acid sequence, 344 residues long: MKVEYHTVYLKKRFPLRISRGVFEGSDNLYISLTENGHTGWGEMAPGGTEGAETAAAGQAMLEQFCATGLSASIHDTWQNAHAAGVAPCALAALDMALWDLRAKQAGVPLYALLGLARRAVVSSVTVGINPPDVVRERVPLLLARGARALKIKLGSPEGIEADQAMFAAVFEAAQGSGAVLRVDANGGWSLKDARRMMGWLAEHDVEYIEQPLVRGAEDQLPDLFKDRAMPIFVDESCRMSGDIATFFQSVDGVNLKLMKCGGITEALRIVATARAFGLKTMIGCMGESSVSIAAGASIGALFDYIDLDSHLNLDPDPATGAPFENGITLPADQPGHGGVLSHA.

Substrate contacts are provided by residues Thr126 and 151-153; that span reads KIK. Residues Asp184, Glu210, and Asp235 each contribute to the Mg(2+) site. Substrate contacts are provided by residues Lys257 and 307–309; that span reads DLD.

This sequence belongs to the mandelate racemase/muconate lactonizing enzyme family. Mg(2+) is required as a cofactor.

Functionally, dipeptide epimerase with a preference for hydrophobic substrates. Catalyzes the epimerization of L-Ala-L-Thr, L-Ala-L-Met, L-Ala-L-His, L-Ala-L-Phe, L-Ala-L-Tyr, L-Ala-L-Trp, L-Ile-L-Ala, L-Ile-L-Ser, L-Ile-L-Met, L-Ile-L-His, L-Ile-L-Phe, L-Ile-L-Tyr, L-Ile-L-Trp, L-Phe-L-Met, L-Phe-L-His, L-Phe-L-Phe, L-Phe-L-Tyr, L-Phe-L-Trp, L-Phe-L-Ser, L-Phe-L-Thr and L-Phe-L-Lys (in vitro). This is Hydrophobic dipeptide epimerase from Roseobacter litoralis (strain ATCC 49566 / DSM 6996 / JCM 21268 / NBRC 15278 / OCh 149).